Here is a 515-residue protein sequence, read N- to C-terminus: Maturase K (515 aa).

This sequence belongs to the intron maturase 2 family. MatK subfamily.

It localises to the plastid. Its subcellular location is the chloroplast. Functionally, usually encoded in the trnK tRNA gene intron. Probably assists in splicing its own and other chloroplast group II introns. The chain is Maturase K from Trillium luteum (Yellow wakerobin).